The primary structure comprises 564 residues: Dihydroxy-acid dehydratase (564 aa).

Residue Cys-51 coordinates [2Fe-2S] cluster. Residue Asp-83 coordinates Mg(2+). Cys-124 contributes to the [2Fe-2S] cluster binding site. Mg(2+)-binding residues include Asp-125 and Lys-126. Residue Lys-126 is modified to N6-carboxylysine. Residue Cys-196 participates in [2Fe-2S] cluster binding. Mg(2+) is bound at residue Glu-448. Ser-474 functions as the Proton acceptor in the catalytic mechanism.

It belongs to the IlvD/Edd family. Homodimer. [2Fe-2S] cluster is required as a cofactor. Requires Mg(2+) as cofactor.

The enzyme catalyses (2R)-2,3-dihydroxy-3-methylbutanoate = 3-methyl-2-oxobutanoate + H2O. It catalyses the reaction (2R,3R)-2,3-dihydroxy-3-methylpentanoate = (S)-3-methyl-2-oxopentanoate + H2O. Its pathway is amino-acid biosynthesis; L-isoleucine biosynthesis; L-isoleucine from 2-oxobutanoate: step 3/4. The protein operates within amino-acid biosynthesis; L-valine biosynthesis; L-valine from pyruvate: step 3/4. Functions in the biosynthesis of branched-chain amino acids. Catalyzes the dehydration of (2R,3R)-2,3-dihydroxy-3-methylpentanoate (2,3-dihydroxy-3-methylvalerate) into 2-oxo-3-methylpentanoate (2-oxo-3-methylvalerate) and of (2R)-2,3-dihydroxy-3-methylbutanoate (2,3-dihydroxyisovalerate) into 2-oxo-3-methylbutanoate (2-oxoisovalerate), the penultimate precursor to L-isoleucine and L-valine, respectively. The sequence is that of Dihydroxy-acid dehydratase from Pyrobaculum calidifontis (strain DSM 21063 / JCM 11548 / VA1).